Reading from the N-terminus, the 295-residue chain is Release factor glutamine methyltransferase (295 aa).

Residues 127 to 131, Asp150, Phe179, and Asn195 each bind S-adenosyl-L-methionine; that span reads GTGSG. Residue 195-198 coordinates substrate; it reads NPPY.

This sequence belongs to the protein N5-glutamine methyltransferase family. PrmC subfamily.

The catalysed reaction is L-glutaminyl-[peptide chain release factor] + S-adenosyl-L-methionine = N(5)-methyl-L-glutaminyl-[peptide chain release factor] + S-adenosyl-L-homocysteine + H(+). Functionally, methylates the class 1 translation termination release factors RF1/PrfA and RF2/PrfB on the glutamine residue of the universally conserved GGQ motif. The protein is Release factor glutamine methyltransferase of Nitratidesulfovibrio vulgaris (strain ATCC 29579 / DSM 644 / CCUG 34227 / NCIMB 8303 / VKM B-1760 / Hildenborough) (Desulfovibrio vulgaris).